Here is a 312-residue protein sequence, read N- to C-terminus: Ribosomal RNA small subunit methyltransferase H (312 aa).

The interval 1-24 (MNIMTANQGAVSPSQTESEASPPT) is disordered. S-adenosyl-L-methionine contacts are provided by residues 55 to 57 (AGH), aspartate 72, tyrosine 96, aspartate 117, and glutamine 124. A disordered region spans residues 288–312 (EQVDNPRARSAKLRVGERAAAPEGS).

The protein belongs to the methyltransferase superfamily. RsmH family.

The protein localises to the cytoplasm. It catalyses the reaction cytidine(1402) in 16S rRNA + S-adenosyl-L-methionine = N(4)-methylcytidine(1402) in 16S rRNA + S-adenosyl-L-homocysteine + H(+). Its function is as follows. Specifically methylates the N4 position of cytidine in position 1402 (C1402) of 16S rRNA. This Deinococcus radiodurans (strain ATCC 13939 / DSM 20539 / JCM 16871 / CCUG 27074 / LMG 4051 / NBRC 15346 / NCIMB 9279 / VKM B-1422 / R1) protein is Ribosomal RNA small subunit methyltransferase H.